The following is a 233-amino-acid chain: Probable 2-phosphosulfolactate phosphatase (233 aa).

Belongs to the ComB family. The cofactor is Mg(2+).

It carries out the reaction (2R)-O-phospho-3-sulfolactate + H2O = (2R)-3-sulfolactate + phosphate. The protein is Probable 2-phosphosulfolactate phosphatase of Clostridium tetani (strain Massachusetts / E88).